Consider the following 186-residue polypeptide: UPF0301 protein Tgr7_2910 (186 aa).

This sequence belongs to the UPF0301 (AlgH) family.

This Thioalkalivibrio sulfidiphilus (strain HL-EbGR7) protein is UPF0301 protein Tgr7_2910.